Reading from the N-terminus, the 615-residue chain is MPIQVLPPQLANQIAAGEVVERPASVVKELVENSLDAGATRIDIDIERGGAKLIRIRDNGCGIKKDELALALARHATSKIASLDDLEAIISLGFRGEALASISSVSRLTLTSRTAEQQEAWQAYAEGRDMDVTVKPAAHPVGTTLEVLDLFYNTPARRKFLRTEKTEFNHIDEIIRRIALARFDVTINLSHNGKIVRQYRAVPEGGQKERRLGAICGTAFLEQALAIEWQHGDLTLRGWVADPNHTTPALAEIQYCYVNGRMMRDRLINHAIRQACEDKLGADQQPAFVLYLEIDPHQVDVNVHPAKHEVRFHQSRLVHDFIYQGVLSVLQQQLETPLPLDDEPQPAPRPIPENRVAAGRNHFAEPAVREPVAPRYTPAPASGSRPAAPWPNAQPGYQKQQGEVYRQLLQTPAPMQKPKAPEPQEPALAANSQSFGRVLTIVHSDCALLERDGNISLLALPVAERWLRQVQLTPGEAPVCAQPLLIPLRLKVSGEEKSALEKAQSALAELGIDFQSDAQHVTIRAVPLPLRQQNLQILIPELIGYLAKQSVFEPGNIAQWIARNLMSENAQWSMAQAITLLADVERLCPQLVKTPPGGLLQSVDLHPAIKALKDE.

Residues 363 to 397 (FAEPAVREPVAPRYTPAPASGSRPAAPWPNAQPGY) form a disordered region. The segment covering 378-391 (PAPASGSRPAAPWP) has biased composition (low complexity).

Belongs to the DNA mismatch repair MutL/HexB family.

In terms of biological role, this protein is involved in the repair of mismatches in DNA. It is required for dam-dependent methyl-directed DNA mismatch repair. May act as a 'molecular matchmaker', a protein that promotes the formation of a stable complex between two or more DNA-binding proteins in an ATP-dependent manner without itself being part of a final effector complex. The sequence is that of DNA mismatch repair protein MutL from Escherichia coli O157:H7.